The sequence spans 396 residues: Pectate lyase 5 (396 aa).

The N-terminal stretch at 1–25 (MGIKHCCYILYFTLALVTLLQPVRS) is a signal peptide. The N-linked (GlcNAc...) asparagine glycan is linked to N36. A disulfide bridge links C53 with C70. Residues D193, D217, and D221 each coordinate Ca(2+). R273 is an active-site residue.

It belongs to the polysaccharide lyase 1 family. Amb a subfamily. Monomer. It depends on Ca(2+) as a cofactor. Post-translationally, the N-terminus is blocked. As to expression, pollen and flowers.

It catalyses the reaction Eliminative cleavage of (1-&gt;4)-alpha-D-galacturonan to give oligosaccharides with 4-deoxy-alpha-D-galact-4-enuronosyl groups at their non-reducing ends.. Its pathway is glycan metabolism; pectin degradation; 2-dehydro-3-deoxy-D-gluconate from pectin: step 2/5. Its function is as follows. Has pectate lyase activity. The sequence is that of Pectate lyase 5 from Ambrosia artemisiifolia (Common ragweed).